We begin with the raw amino-acid sequence, 229 residues long: PKHD-type hydroxylase RPA3479 (229 aa).

In terms of domain architecture, Fe2OG dioxygenase spans 78-180; it reads QIFPPLFNRY…RVASFFWLQS (103 aa). Positions 98, 100, and 161 each coordinate Fe cation. Residue Arg171 coordinates 2-oxoglutarate.

Fe(2+) serves as cofactor. Requires L-ascorbate as cofactor.

The polypeptide is PKHD-type hydroxylase RPA3479 (Rhodopseudomonas palustris (strain ATCC BAA-98 / CGA009)).